The primary structure comprises 1688 residues: Voltage-dependent L-type calcium channel subunit alpha-1S (1688 aa).

The disordered stretch occupies residues 1-24 (MDAMGSAAEEGTQKKKRRPLVPPP). At 1 to 51 (MDAMGSAAEEGTQKKKRRPLVPPPPRPPRALFCLGLQNPFRKFCINIVEWK) the chain is on the cytoplasmic side. An I repeat occupies 38–335 (NPFRKFCINI…LVLGVLSGEF (298 aa)). Residues 52–70 (PFEMIILLTIFANCVALAI) form a helical membrane-spanning segment. The Extracellular segment spans residues 71–88 (FLPMPEDDTNSTNSVLEK). Asn80 carries N-linked (GlcNAc...) asparagine glycosylation. A helical transmembrane segment spans residues 89 to 108 (VEYIFLFIFTIESFLKIVAY). The Cytoplasmic segment spans residues 109-120 (GFILHTDAYLRN). The chain crosses the membrane as a helical span at residues 121 to 139 (GWNILDFTIVSVGVFSVLL). Residues 140-158 (EQISKLQGLPAPGKSSGFN) are Extracellular-facing. The chain crosses the membrane as a helical span at residues 159–177 (VKALRAFRVLRPLRLVSGV). Topologically, residues 178–196 (PSLQVVLNSIIKAMIPLLH) are cytoplasmic. A helical transmembrane segment spans residues 197–216 (IALLVLFMIIIYAIVGLELF). Over 217–307 (SGKMHKTCYF…WVNDAIGNEW (91 aa)) the chain is Extracellular. A glycan (N-linked (GlcNAc...) asparagine) is linked at Asn255. Glu290 is a Ca(2+) binding site. Residues 308 to 332 (PWIYFVSLILLGSFFVLNLVLGVLS) traverse the membrane as a helical segment. At 333-431 (GEFTKEREKA…RKSRDLVKSR (99 aa)) the chain is on the cytoplasmic side. The binding to the beta subunit stretch occupies residues 355–372 (QAMDEDLRGYLDWITHAE). One copy of the II repeat lies at 417 to 663 (HRLLRRKSRD…VFLAIAVDNL (247 aa)). Residues 432 to 450 (FFYWLVIIIILLNTVIIAT) form a helical membrane-spanning segment. Topologically, residues 451 to 465 (EHHHQPDSLTKAQDI) are extracellular. A helical membrane pass occupies residues 466–485 (ANEVLLALFTMEMIVKIYAL). The Cytoplasmic portion of the chain corresponds to 486 to 493 (GFQSYFMS). A helical transmembrane segment spans residues 494–512 (LFNRFDSFVVCTGLLEVML). Over 513–522 (VASDIMSPLG) the chain is Extracellular. The chain crosses the membrane as a helical span at residues 523 to 541 (ISVLRCIRLLRIFKITRYW). Residues 542 to 560 (TSLNNLVASLLNSVRSIAS) are Cytoplasmic-facing. The chain crosses the membrane as a helical span at residues 561–580 (LLLLLFLFMIIFALLGMQMF). Residues 581 to 635 (GGKFDFEDLEVRRSTFDTFPQALITVFQILTGEDWTAVMYNGIMAYGGPTYSGMS) are Extracellular-facing. Glu613 contacts Ca(2+). Residues 636–660 (VCIYFIILFVCGNYILLNVFLAIAV) form a helical membrane-spanning segment. The Cytoplasmic portion of the chain corresponds to 661 to 797 (DNLAEAENLT…VLCHRIINAT (137 aa)). 2 disordered regions span residues 672-696 (AQKA…TEEE) and 729-755 (EIKD…ISPR). Residues 740–749 (PGDDEEEEPE) show a composition bias toward acidic residues. One copy of the III repeat lies at 784-1066 (NKIRVLCHRI…IFVGFVIVTF (283 aa)). A helical membrane pass occupies residues 798 to 816 (TFTNFILLFILLSSISLAA). Over 817-832 (EDPIQPESFRNKVLSK) the chain is Extracellular. A helical membrane pass occupies residues 833 to 852 (LDIVFTVIFTTEIVLKMTAY). Residues 853 to 864 (GAFLHKGSFCRN) are Cytoplasmic-facing. A helical membrane pass occupies residues 865–883 (SFNILDLSVVGVSLISMGI). Topologically, residues 884–890 (ESSAISV) are extracellular. A helical membrane pass occupies residues 891 to 909 (VKILRVLRVLRPLRAINRA). The Cytoplasmic segment spans residues 910-928 (KGLKHVVQCLFVAIKTIGN). Residues 929–948 (IVLVTTLLQFMFSCIGVQLF) traverse the membrane as a helical segment. Topologically, residues 949-1038 (KGKFYSCTDT…MGPIYNYRIE (90 aa)) are extracellular. The interval 986 to 1075 (RVWSHSDFHF…FQEQGEQEYK (90 aa)) is dihydropyridine binding. Glu1012 contributes to the Ca(2+) binding site. Residues 1039–1063 (IAVFFIVYIILIAFFMMNIFVGFVI) form a helical membrane-spanning segment. The Cytoplasmic segment spans residues 1064–1116 (VTFQEQGEQEYKDCELDKNQRQCVQYALKARPLRRYIPKNPHQYKIWYVVTSS). The IV repeat unit spans residues 1103 to 1371 (NPHQYKIWYV…LFVAVIMDNF (269 aa)). A helical transmembrane segment spans residues 1117-1135 (YFEYLMFFLITLNTISLGM). Topologically, residues 1136 to 1150 (QHYGQTAEFSYMSDI) are extracellular. A helical transmembrane segment spans residues 1151 to 1170 (LNVAFTGIFTVEMFLKLAAF). The Cytoplasmic portion of the chain corresponds to 1171–1178 (KAKGYFGD). The helical transmembrane segment at 1179 to 1197 (PWNVFDFLIVIGSVIDVIL) threads the bilayer. At 1198–1218 (SEIDTPGIPATPGAEESSRIS) the chain is on the extracellular side. Residues 1219–1237 (ITFFRLFRVLRLVKLLSRG) form a helical membrane-spanning segment. Topologically, residues 1238–1256 (EGVRTLLWTFIKSFQALPY) are cytoplasmic. The chain crosses the membrane as a helical span at residues 1257 to 1276 (VALLIVMLFFIYAVIGMQVF). Residues 1277–1343 (GKIALVDGTH…GEEYTCGTSF (67 aa)) are Extracellular-facing. The interval 1324–1390 (LCDPMSDFQP…LGPHHLDEFK (67 aa)) is dihydropyridine binding. The tract at residues 1336-1379 (EYTCGTSFAYFYFISFYMLCAFLIINLFVAVIMDNFDYLTRDWS) is phenylalkylamine binding. Residues 1344–1368 (AYFYFISFYMLCAFLIINLFVAVIM) traverse the membrane as a helical segment. Topologically, residues 1369-1688 (DNFDYLTRDW…TNSSISQATN (320 aa)) are cytoplasmic. Disordered regions lie at residues 1635–1664 (PEPV…RLTT) and 1669–1688 (RVQQ…QATN). Positions 1678–1688 (DTNSSISQATN) are enriched in polar residues.

The protein belongs to the calcium channel alpha-1 subunit (TC 1.A.1.11) family. In terms of assembly, multisubunit complex consisting of alpha-1, alpha-2, beta and delta subunits in a 1:1:1:1 ratio. The channel activity is directed by the pore-forming and voltage-sensitive alpha-1 subunit. In many cases, this subunit is sufficient to generate voltage-sensitive calcium channel activity. The auxiliary subunits beta and alpha-2/delta linked by a disulfide bridge regulate the channel activity. An additional gamma subunit is present only in skeletal muscle L-type channel. Post-translationally, phosphorylation by PKA stimulates the calcium channel function. In terms of tissue distribution, skeletal muscle specific.

It localises to the membrane. Functionally, voltage-sensitive calcium channels (VSCC) mediate the entry of calcium ions into excitable cells and are also involved in a variety of calcium-dependent processes, including muscle contraction, gene expression, cell motility, cell division and cell death. The isoform alpha-1S gives rise to L-type calcium currents. Long-lasting (L-type) calcium channels belong to the 'high-voltage activated' (HVA) group. They are blocked by dihydropyridines (DHP), phenylalkylamines, and by benzothiazepines. Calcium channels containing the alpha-1S subunit play an important role in excitation-contraction coupling in skele|tal muscle. The protein is Voltage-dependent L-type calcium channel subunit alpha-1S of Aquarana catesbeiana (American bullfrog).